A 432-amino-acid polypeptide reads, in one-letter code: Adenosylhomocysteinase (432 aa).

Ser-2 carries the post-translational modification N-acetylserine. Thr-57, Asp-131, and Glu-156 together coordinate substrate. Ser-183 is subject to Phosphoserine. The segment at 183 to 350 (SVTKSKFDNL…EGRLVNLGCA (168 aa)) is NAD binding. Residues Lys-186 and Asp-190 each coordinate substrate. At Lys-186 the chain carries N6-(2-hydroxyisobutyryl)lysine. Phosphotyrosine is present on Tyr-193.

The protein belongs to the adenosylhomocysteinase family. In terms of assembly, homotetramer. Interaction with AHCYL1. The cofactor is NAD(+).

The protein localises to the cytoplasm. The protein resides in the melanosome. It is found in the nucleus. Its subcellular location is the endoplasmic reticulum. The enzyme catalyses S-adenosyl-L-homocysteine + H2O = L-homocysteine + adenosine. The protein operates within amino-acid biosynthesis; L-homocysteine biosynthesis; L-homocysteine from S-adenosyl-L-homocysteine: step 1/1. In terms of biological role, catalyzes the hydrolysis of S-adenosyl-L-homocysteine to form adenosine and homocysteine. Binds copper ions. This Sus scrofa (Pig) protein is Adenosylhomocysteinase (AHCY).